We begin with the raw amino-acid sequence, 368 residues long: uncharacterized protein (368 aa).

Belongs to the CdaR family.

This is an uncharacterized protein from Bacillus subtilis (strain 168).